Consider the following 127-residue polypeptide: Small ribosomal subunit protein uS11 (127 aa).

The protein belongs to the universal ribosomal protein uS11 family. In terms of assembly, part of the 30S ribosomal subunit. Interacts with proteins S7 and S18. Binds to IF-3.

Located on the platform of the 30S subunit, it bridges several disparate RNA helices of the 16S rRNA. Forms part of the Shine-Dalgarno cleft in the 70S ribosome. The polypeptide is Small ribosomal subunit protein uS11 (Rickettsia felis (strain ATCC VR-1525 / URRWXCal2) (Rickettsia azadi)).